Here is a 122-residue protein sequence, read N- to C-terminus: MIQNESRLKVADNSGARELLVIRVLGGSKRKTGNIGDIVVCTVKQATPGGVVKKGDVVKAVIVRTKSGARREDGSYIKFDENAGVIINADKSPRGTRIFGPVARELREYDFMKIVSLAPEVL.

This sequence belongs to the universal ribosomal protein uL14 family. In terms of assembly, part of the 50S ribosomal subunit. Forms a cluster with proteins L3 and L19. In the 70S ribosome, L14 and L19 interact and together make contacts with the 16S rRNA in bridges B5 and B8.

Functionally, binds to 23S rRNA. Forms part of two intersubunit bridges in the 70S ribosome. The chain is Large ribosomal subunit protein uL14 from Lactobacillus helveticus (strain DPC 4571).